The chain runs to 163 residues: Lipoprotein signal peptidase (163 aa).

Transmembrane regions (helical) follow at residues 11 to 31 (ILIA…IATT), 63 to 83 (KMTF…YFFI), and 88 to 108 (YNLF…GNFI). Active-site residues include D118 and D136. Residues 131 to 151 (IFNIADSSLTIGVILIIIALL) traverse the membrane as a helical segment.

This sequence belongs to the peptidase A8 family.

The protein localises to the cell membrane. It catalyses the reaction Release of signal peptides from bacterial membrane prolipoproteins. Hydrolyzes -Xaa-Yaa-Zaa-|-(S,diacylglyceryl)Cys-, in which Xaa is hydrophobic (preferably Leu), and Yaa (Ala or Ser) and Zaa (Gly or Ala) have small, neutral side chains.. It participates in protein modification; lipoprotein biosynthesis (signal peptide cleavage). This protein specifically catalyzes the removal of signal peptides from prolipoproteins. This Staphylococcus aureus (strain MRSA252) protein is Lipoprotein signal peptidase.